The primary structure comprises 277 residues: MVVKIGILKCGNIGMSPVVDLCLDERADRNDIDVRVLGSGAKMGPEQVEEVAKKMVEEVKPDFIVYIGPNPAAPGPKKAREILSAGGIPTVIIGDAPGIKDKDAMAEEGLGYVLIKCDPMIGARRQFLDPVEMAMFNADVIRVLAGTGALRVVQNAIDDMVFAVEEGKEIPLPKIVITEQKAVDAMDFANPYAKAKAMAAFVMAEKVADIDVKGCFMTKEMEKYIPIVASAHEAIRYAAKLVDEARELEKATDAVSRKPHAGEGKILNKCKLMAKPE.

It belongs to the MTD family.

It catalyses the reaction 5,10-methylenetetrahydromethanopterin + oxidized coenzyme F420-(gamma-L-Glu)(n) + 2 H(+) = 5,10-methenyl-5,6,7,8-tetrahydromethanopterin + reduced coenzyme F420-(gamma-L-Glu)(n). Its pathway is one-carbon metabolism; methanogenesis from CO(2); 5,10-methylene-5,6,7,8-tetrahydromethanopterin from 5,10-methenyl-5,6,7,8-tetrahydromethanopterin (coenzyme F420 route): step 1/1. Functionally, catalyzes the reversible reduction of methenyl-H(4)MPT(+) to methylene-H(4)MPT. This chain is F420-dependent methylenetetrahydromethanopterin dehydrogenase, found in Methanococcus maripaludis (strain C7 / ATCC BAA-1331).